The following is a 280-amino-acid chain: uncharacterized protein (280 aa).

Residue tyrosine 54 is the Proton donor of the active site. Residue histidine 116 coordinates substrate. 194–246 (SPLMQGQLLDHPVLADIAQTYNKSVAQIILRWDLQHGIITIPKSTKEHRIKEN) provides a ligand contact to NADP(+).

It belongs to the aldo/keto reductase family.

This is an uncharacterized protein from Bacillus subtilis (strain 168).